Consider the following 367-residue polypeptide: 2-aminoethylphosphonate--pyruvate transaminase (367 aa).

Pyridoxal 5'-phosphate-binding positions include 65 to 67, Y92, T143, and D168; that span reads SGS. N6-(pyridoxal phosphate)lysine is present on K194. T243 provides a ligand contact to pyridoxal 5'-phosphate.

It belongs to the class-V pyridoxal-phosphate-dependent aminotransferase family. PhnW subfamily. Homodimer. Pyridoxal 5'-phosphate is required as a cofactor.

It catalyses the reaction (2-aminoethyl)phosphonate + pyruvate = phosphonoacetaldehyde + L-alanine. Its function is as follows. Involved in phosphonate degradation. The chain is 2-aminoethylphosphonate--pyruvate transaminase (phnW) from Salmonella typhimurium (strain LT2 / SGSC1412 / ATCC 700720).